The following is a 38-amino-acid chain: Large ribosomal subunit protein bL36 (38 aa).

It belongs to the bacterial ribosomal protein bL36 family.

This chain is Large ribosomal subunit protein bL36 (rpmJ), found in Streptococcus pneumoniae serotype 4 (strain ATCC BAA-334 / TIGR4).